Reading from the N-terminus, the 427-residue chain is Probable fatty acid methyltransferase Rv3720 (427 aa).

Residues 167 to 168 (YT), 202 to 210 (LLDVGCGWG), and 227 to 232 (TLSAEQ) each bind S-adenosyl-L-methionine.

The protein belongs to the CFA/CMAS family.

May be a S-adenosylmethionine-dependent methyltransferase involved in fatty acid metabolism. This Mycobacterium tuberculosis (strain ATCC 25618 / H37Rv) protein is Probable fatty acid methyltransferase Rv3720.